The sequence spans 65 residues: Large ribosomal subunit protein bL35 (65 aa).

Positions 1-16 are enriched in basic residues; it reads MPKQKTHRASAKRFKR. A disordered region spans residues 1 to 20; the sequence is MPKQKTHRASAKRFKRTGSG.

Belongs to the bacterial ribosomal protein bL35 family.

In Streptococcus equi subsp. equi (strain 4047), this protein is Large ribosomal subunit protein bL35.